We begin with the raw amino-acid sequence, 155 residues long: UPF0178 protein mlr0875 (155 aa).

This sequence belongs to the UPF0178 family.

The protein is UPF0178 protein mlr0875 of Mesorhizobium japonicum (strain LMG 29417 / CECT 9101 / MAFF 303099) (Mesorhizobium loti (strain MAFF 303099)).